The sequence spans 163 residues: Succinate dehydrogenase assembly factor 2-A, mitochondrial (163 aa).

The transit peptide at 1 to 23 (MLRQLRLTMDISGWIFLPWRRSM) directs the protein to the mitochondrion.

It belongs to the SDHAF2 family. Interacts with the flavoprotein subunit within the SDH catalytic dimer.

The protein localises to the mitochondrion matrix. Functionally, plays an essential role in the assembly of succinate dehydrogenase (SDH), an enzyme complex (also referred to as respiratory complex II) that is a component of both the tricarboxylic acid (TCA) cycle and the mitochondrial electron transport chain, and which couples the oxidation of succinate to fumarate with the reduction of ubiquinone (coenzyme Q) to ubiquinol. Required for flavinylation (covalent attachment of FAD) of the flavoprotein subunit of the SDH catalytic dimer. The polypeptide is Succinate dehydrogenase assembly factor 2-A, mitochondrial (Drosophila sechellia (Fruit fly)).